The primary structure comprises 415 residues: Histidine--tRNA ligase (415 aa).

It belongs to the class-II aminoacyl-tRNA synthetase family. Homodimer.

Its subcellular location is the cytoplasm. The catalysed reaction is tRNA(His) + L-histidine + ATP = L-histidyl-tRNA(His) + AMP + diphosphate + H(+). The polypeptide is Histidine--tRNA ligase (Rhodospirillum rubrum (strain ATCC 11170 / ATH 1.1.1 / DSM 467 / LMG 4362 / NCIMB 8255 / S1)).